A 562-amino-acid polypeptide reads, in one-letter code: Putative transport protein PC1_1686 (562 aa).

A run of 6 helical transmembrane segments spans residues 8-28, 32-52, 66-86, 93-113, 116-136, and 158-178; these read LLNG…LCLG, LGPV…LLGQ, FMLF…SIFF, FMLA…LGKF, WGIG…PVLV, and HLSL…IFGA. RCK C-terminal domains lie at 202–288 and 292–373; these read LDAD…NFRD and VFDR…RIGF. The next 5 membrane-spanning stretches (helical) occupy residues 383 to 403, 406 to 426, 447 to 467, 478 to 498, and 537 to 557; these read LLAF…TIQF, FTFG…LGFL, FGLM…INSS, SGLI…AYVL, and GTYA…VIIW.

The protein belongs to the AAE transporter (TC 2.A.81) family. YbjL subfamily.

The protein localises to the cell membrane. This chain is Putative transport protein PC1_1686, found in Pectobacterium carotovorum subsp. carotovorum (strain PC1).